The following is a 921-amino-acid chain: MASKGTEGGHGGVERKEQQQQRGYQLPRDSRGSLEVFNPSSASSFRTAAAAPKSASPFLAIPDREEDNVVAQQRAAEWGLVLQTDHHTGLPQGVSARPSSGSARTSSEDNPQQQQSAAAIPRVSEELRAALSVFQQTFVVSDATHPNHPIMYASAGFFNMTGYTSKEVVGRNCRFLQGSGTDPHEIDKIRQSLANGSNYCGRILNYKKDGTPFWNLLTIAPIKDEDGRLLKFIGMQVEVSKYTEGKKDTVVRPNGLSESLIKYDARQKDHARSSVSELLLALKNPRSLSESSNNTLKRKSQESLSMSMSEVPSKRSSESGSRRNSRSGTRSSLQKINEVPDQVNRTRKSGLRAFMGFLGMGHGSVEKNMLKPRDEDPLIDSDDERPESFEDEFRRKEMRRGIDLATTLERIEKNFVITDPRLPDNPIIFASDSFLQLTEYNREEILGRNCRFLQGPETDRATVRKIRDAIDNQAEVTVQLINYTKSGKKFWNLFHLQPMRDQKGDVQYFIGVQLDGTEHVQDDAAKEGVVLVKKTADNIDEAAKELPDANLRPKDLWANHSKVVLPNPHMKDTASWRAIQKVLESGESIGLKHFRPVKPLGSGDTGSVHLVELLNTGEYFAMKAMDKSIMLNRNKVHRATAERQILDLLDHPFLPTLYASFQTKTHICLITDYCPGGELFVLLDNQPLKVLHEDAVRFYAAEVVVALEYLHCQGIIYRDLKPENILLHRDGHISLTDFDLSCLTSCRPQVFLPEDADEKKGRKNGSYPIFFAEPMRASNSFVGTEEYIAPEIITGAGHTSAVDWWALGILLYEMLYGYTPFRGKTRQRTFANILHKDIRFPASISVSLAARQLMYRLLHRDPANRLGSYEGANEIKGHPFFRGINWPLIRATAPPKLEIPLFSKDDMEKKGLVTNNRTDMF.

A compositionally biased stretch (gly residues) spans 1-11; sequence MASKGTEGGHG. 2 disordered regions span residues 1–59 and 88–118; these read MASK…SPFL and TGLP…QSAA. Residues 40–51 are compositionally biased toward low complexity; that stretch reads SSASSFRTAAAA. The segment covering 97 to 117 has biased composition (polar residues); it reads RPSSGSARTSSEDNPQQQQSA. In terms of domain architecture, PAS 1 spans 123–197; that stretch reads VSEELRAALS…KIRQSLANGS (75 aa). FMN-binding positions include 172-177, Arg-190, Asn-205, Asn-215, and Gln-236; that span reads NCRFLQ. Position 173 is an S-4a-FMN cysteine (Cys-173). A PAC 1 domain is found at 197 to 251; it reads SNYCGRILNYKKDGTPFWNLLTIAPIKDEDGRLLKFIGMQVEVSKYTEGKKDTVV. Residues 286–295 show a composition bias toward polar residues; sequence RSLSESSNNT. Disordered stretches follow at residues 286 to 345 and 366 to 391; these read RSLS…QVNR and EKNM…SFED. 2 stretches are compositionally biased toward basic and acidic residues: residues 312 to 321 and 366 to 376; these read PSKRSSESGS and EKNMLKPRDED. In terms of domain architecture, PAS 2 spans 400–473; it reads RGIDLATTLE…RKIRDAIDNQ (74 aa). Residues 449-454, Arg-467, Asn-482, Asn-492, and Gln-513 each bind FMN; that span reads NCRFLQ. Cys-450 carries the post-translational modification S-4a-FMN cysteine. The PAC 2 domain occupies 474–528; the sequence is AEVTVQLINYTKSGKKFWNLFHLQPMRDQKGDVQYFIGVQLDGTEHVQDDAAKEG. One can recognise a Protein kinase domain in the interval 594-881; the sequence is FRPVKPLGSG…ANEIKGHPFF (288 aa). ATP contacts are provided by residues 600–608 and Lys-623; that span reads LGSGDTGSV. The active-site Proton acceptor is the Asp-719.

Belongs to the protein kinase superfamily. Ser/Thr protein kinase family. In terms of assembly, homodimer. FMN is required as a cofactor. Post-translationally, autophosphorylated in response to blue light irradiation. 2 molecules of FMN bind covalently to cysteines after exposure to blue light and are reversed in the dark.

It carries out the reaction L-seryl-[protein] + ATP = O-phospho-L-seryl-[protein] + ADP + H(+). The catalysed reaction is L-threonyl-[protein] + ATP = O-phospho-L-threonyl-[protein] + ADP + H(+). Protein kinase that acts as a blue light photoreceptor in a signal-transduction pathway for phototropic responses. Regulates a wide range of physiological activities in plants that maximize the efficiency of photosynthesis, such as chloroplast relocations, stomata opening, and leaf expansion. The sequence is that of Phototropin-1B (PHOT1B) from Oryza sativa subsp. japonica (Rice).